Here is a 117-residue protein sequence, read N- to C-terminus: UPF0342 protein BcerKBAB4_0767 (117 aa).

The protein belongs to the UPF0342 family.

The polypeptide is UPF0342 protein BcerKBAB4_0767 (Bacillus mycoides (strain KBAB4) (Bacillus weihenstephanensis)).